We begin with the raw amino-acid sequence, 466 residues long: Cysteine--tRNA ligase (466 aa).

Zn(2+) is bound at residue cysteine 27. Residues 29–39 (PTVYNYFHIGN) carry the 'HIGH' region motif. Positions 207, 232, and 236 each coordinate Zn(2+). A 'KMSKS' region motif is present at residues 264–268 (KMSKS). Residue lysine 267 coordinates ATP.

It belongs to the class-I aminoacyl-tRNA synthetase family. In terms of assembly, monomer. The cofactor is Zn(2+).

Its subcellular location is the cytoplasm. It catalyses the reaction tRNA(Cys) + L-cysteine + ATP = L-cysteinyl-tRNA(Cys) + AMP + diphosphate. The chain is Cysteine--tRNA ligase from Clostridium novyi (strain NT).